Reading from the N-terminus, the 496-residue chain is Flotillin-like protein 3 (496 aa).

Residue cysteine 37 is the site of S-palmitoyl cysteine attachment. Residues 301–328 (VVREAELQLEVERKNALRLTEKLKAEKL) are a coiled coil.

The protein belongs to the band 7/mec-2 family. Flotillin subfamily. Post-translationally, may be palmitoylated.

It is found in the cell membrane. It localises to the membrane. Its subcellular location is the caveola. In terms of biological role, may act as a scaffolding protein within caveolar membranes, functionally participating in formation of caveolae or caveolae-like vesicles. This is Flotillin-like protein 3 (FLOT3) from Oryza sativa subsp. japonica (Rice).